A 223-amino-acid polypeptide reads, in one-letter code: 2-phospho-L-lactate guanylyltransferase (223 aa).

Belongs to the CofC family. Homodimer.

It carries out the reaction (2S)-2-phospholactate + GTP + H(+) = (2S)-lactyl-2-diphospho-5'-guanosine + diphosphate. Its pathway is cofactor biosynthesis; coenzyme F420 biosynthesis. Functionally, guanylyltransferase that catalyzes the activation of (2S)-2-phospholactate (2-PL) as (2S)-lactyl-2-diphospho-5'-guanosine, via the condensation of 2-PL with GTP. It is involved in the biosynthesis of coenzyme F420, a hydride carrier cofactor. This is 2-phospho-L-lactate guanylyltransferase from Methanothermobacter thermautotrophicus (strain ATCC 29096 / DSM 1053 / JCM 10044 / NBRC 100330 / Delta H) (Methanobacterium thermoautotrophicum).